Here is a 1174-residue protein sequence, read N- to C-terminus: Creatine kinase, flagellar (1174 aa).

The segment covering 1-14 has biased composition (polar residues); the sequence is MGCAASSQQTTATG. The tract at residues 1–62 is disordered; the sequence is MGCAASSQQT…PFVEPDPNYP (62 aa). A compositionally biased stretch (low complexity) spans 18 to 39; that stretch reads AAGEKANPAPANNNPNAANKAE. The 87-residue stretch at 53-139 folds into the Phosphagen kinase N-terminal 1 domain; the sequence is PFVEPDPNYP…FDPTIDKRHN (87 aa). A 1; approximate repeat occupies 61-414; that stretch reads YPDLSKHNNY…EKALEKGSDI (354 aa). The 243-residue stretch at 166–408 folds into the Phosphagen kinase C-terminal 1 domain; sequence YVLSCRVRTG…KKLIELEKAL (243 aa). Residues 169 to 173, H232, R277, and 333 to 337 each bind ATP; these read SCRVR and RAGVH. Residues 426–512 enclose the Phosphagen kinase N-terminal 2 domain; that stretch reads RAEQVKEGYP…FDPVIDARHG (87 aa). The 2; approximate repeat unit spans residues 434 to 787; that stretch reads YPDLSKHNNH…EKKLEKGEDI (354 aa). The region spanning 539-781 is the Phosphagen kinase C-terminal 2 domain; the sequence is YVLSCRVRTG…ELLVQMEKKL (243 aa). ATP contacts are provided by residues 542–546, H605, R706, 734–739, and D749; these read SCRVR and RGTGGV. Residues 800–886 enclose the Phosphagen kinase N-terminal 3 domain; it reads PIKPFSYDYP…FDPVISARHG (87 aa). The stretch at 808-1161 is one 3; approximate repeat; it reads YPDFSLHNNW…EKALMKGEDI (354 aa). Positions 913 to 1155 constitute a Phosphagen kinase C-terminal 3 domain; the sequence is FVLSCRVRTG…KLLVNLEKAL (243 aa).

It belongs to the ATP:guanido phosphotransferase family. As to quaternary structure, monomer.

Its subcellular location is the cytoplasm. It localises to the cytoskeleton. The protein localises to the flagellum axoneme. The catalysed reaction is creatine + ATP = N-phosphocreatine + ADP + H(+). In terms of biological role, this axonemal protein participates in an energy shuttle that utilizes phosphocreatine to transfer the energy from ATP generated by the mitochondrion in the sperm head to dynein in the distal portions of the flagellum. The polypeptide is Creatine kinase, flagellar (Strongylocentrotus purpuratus (Purple sea urchin)).